The chain runs to 182 residues: Ribosome-recycling factor (182 aa).

Belongs to the RRF family.

Its subcellular location is the cytoplasm. In terms of biological role, responsible for the release of ribosomes from messenger RNA at the termination of protein biosynthesis. May increase the efficiency of translation by recycling ribosomes from one round of translation to another. In Prochlorococcus marinus (strain AS9601), this protein is Ribosome-recycling factor.